A 526-amino-acid polypeptide reads, in one-letter code: Glutamyl-tRNA(Gln) amidotransferase subunit A, mitochondrial (526 aa).

Residues lysine 76 and serine 171 each act as charge relay system in the active site. Serine 195 acts as the Acyl-ester intermediate in catalysis.

It belongs to the amidase family. GatA subfamily. In terms of assembly, subunit of the heterotrimeric GatCAB amidotransferase (AdT) complex, composed of A (QRSL1), B (GATB) and C (GATC) subunits.

It localises to the mitochondrion. The enzyme catalyses L-glutamyl-tRNA(Gln) + L-glutamine + ATP + H2O = L-glutaminyl-tRNA(Gln) + L-glutamate + ADP + phosphate + H(+). In terms of biological role, allows the formation of correctly charged Gln-tRNA(Gln) through the transamidation of misacylated Glu-tRNA(Gln) in the mitochondria. The reaction takes place in the presence of glutamine and ATP through an activated gamma-phospho-Glu-tRNA(Gln). This Canis lupus familiaris (Dog) protein is Glutamyl-tRNA(Gln) amidotransferase subunit A, mitochondrial.